We begin with the raw amino-acid sequence, 394 residues long: Sugar efflux transporter C (394 aa).

The Periplasmic portion of the chain corresponds to 1-10 (MQKTATTPSK). A helical transmembrane segment spans residues 11–31 (ILDLTAAAFLLVAFLTGIAGA). The Cytoplasmic portion of the chain corresponds to 32-49 (LQTPTLSIFLADELKARP). Residues 50-70 (IMVGFFFTGSAIMGILVSQFL) form a helical membrane-spanning segment. Over 71–80 (ARHSDKQGDR) the chain is Periplasmic. The chain crosses the membrane as a helical span at residues 81–101 (KLLILLCCLFGVLACTLFAWN). Topologically, residues 102–104 (RNY) are cytoplasmic. A helical transmembrane segment spans residues 105–125 (FILLSTGVLLSSFASTANPQM). At 126 to 150 (FALAREHADRTGRETVMFSTFLRAQ) the chain is on the periplasmic side. A helical membrane pass occupies residues 151 to 171 (ISLAWVIGPPLAYELAMGFSF). Position 172 (lysine 172) is a topological domain, cytoplasmic. Residues 173-193 (VMYLTAAIAFVVCGLIVWLFL) traverse the membrane as a helical segment. The Periplasmic portion of the chain corresponds to 194-224 (PSIQRNIPVVTQPVEILPSTHRKRDTRLLFV). Residues 225–245 (VCSMMWAANNLYMINMPLFII) form a helical membrane-spanning segment. Residues 246–253 (DELHLTDK) lie on the Cytoplasmic side of the membrane. The chain crosses the membrane as a helical span at residues 254 to 274 (LTGEMIGIAAGLEIPMMLIAG). Residues 275 to 283 (YYMKRIGKR) lie on the Periplasmic side of the membrane. A helical membrane pass occupies residues 284-304 (LLMLIAIVSGMCFYASVLMAT). The Cytoplasmic segment spans residues 305–310 (TPAVEL). A helical transmembrane segment spans residues 311–331 (ELQILNAIFLGILCGIGMLYF). The Periplasmic segment spans residues 332–370 (QDLMPEKIGSATTLYANTSRVGWIIAGSVDGIMVEIWSY). Residues 371–391 (HALFWLAIGMLGIAMICLLFI) traverse the membrane as a helical segment. Over 392–394 (KDI) the chain is Cytoplasmic.

It belongs to the major facilitator superfamily. Set transporter family.

It is found in the cell inner membrane. In terms of biological role, involved in the efflux of sugars. The physiological role may be the detoxification of non-metabolizable sugar analogs. This is Sugar efflux transporter C (setC) from Escherichia coli (strain K12).